Here is a 196-residue protein sequence, read N- to C-terminus: T-cell surface glycoprotein CD3 epsilon chain (196 aa).

The N-terminal stretch at 1 to 21 (MPSGNLWKVLGLCLLSVGAWG) is a signal peptide. At 22-116 (QEDIERPDED…VCENCVEVDL (95 aa)) the chain is on the extracellular side. Residues 28–102 (PDEDTQKTFK…VGEKTSHRLY (75 aa)) form the Ig-like domain. A disulfide bridge connects residues Cys49 and Cys91. A helical membrane pass occupies residues 117-137 (MAVVTIIVVDICITLGLLMVV). Over 138–196 (YYYSKSRKAKAMPVTRGAGAGGRPRGQNRERPPPVPNPDYEPIRKGQRDLYSGLNQRGR) the chain is Cytoplasmic. The disordered stretch occupies residues 150–196 (PVTRGAGAGGRPRGQNRERPPPVPNPDYEPIRKGQRDLYSGLNQRGR). The tract at residues 164-181 (QNRERPPPVPNPDYEPIR) is NUMB-binding region. The 28-residue stretch at 167 to 194 (ERPPPVPNPDYEPIRKGQRDLYSGLNQR) folds into the ITAM domain. The interval 168 to 175 (RPPPVPNP) is proline-rich sequence. A phosphotyrosine mark is found at Tyr177 and Tyr188.

In terms of assembly, the TCR-CD3 complex is composed of a CD3D/CD3E and a CD3G/CD3E heterodimers that preferentially associate with TCRalpha and TCRbeta, respectively, to form TCRalpha/CD3E/CD3G and TCRbeta/CD3G/CD3E trimers. In turn, the hexamer interacts with CD3Z homodimer to form the TCR-CD3 complex. Alternatively, TCRalpha and TCRbeta can be replaced by TCRgamma and TCRdelta. Interacts with CD6. Interacts (via Proline-rich sequence) with NCK1; the interaction is ligand dependent but independent of tyrosine kinase activation. In terms of processing, phosphorylated on Tyr residues after T-cell receptor triggering by LCK in association with CD4/CD8.

Its subcellular location is the cell membrane. Part of the TCR-CD3 complex present on T-lymphocyte cell surface that plays an essential role in adaptive immune response. When antigen presenting cells (APCs) activate T-cell receptor (TCR), TCR-mediated signals are transmitted across the cell membrane by the CD3 chains CD3D, CD3E, CD3G and CD3Z. All CD3 chains contain immunoreceptor tyrosine-based activation motifs (ITAMs) in their cytoplasmic domain. Upon TCR engagement, these motifs become phosphorylated by Src family protein tyrosine kinases LCK and FYN, resulting in the activation of downstream signaling pathways. In addition of this role of signal transduction in T-cell activation, CD3E plays an essential role in correct T-cell development. Also participates in internalization and cell surface down-regulation of TCR-CD3 complexes via endocytosis sequences present in CD3E cytosolic region. In addition to its role as a TCR coreceptor, it serves as a receptor for ITPRIPL1. Ligand recognition inhibits T-cell activation by promoting interaction with NCK1, which prevents CD3E-ZAP70 interaction and blocks the ERK-NFkB signaling cascade and calcium influx. This Sus scrofa (Pig) protein is T-cell surface glycoprotein CD3 epsilon chain (CD3E).